The following is a 174-amino-acid chain: Membrane protein NfeD2 (174 aa).

Transmembrane regions (helical) follow at residues 16–36 (LIIAGSLTLLFLFFGDVFSGL), 47–67 (LVLSFFTCFSAGGYIGELVLP), and 72–92 (LIALLSCILSIMLVVLLHIFV).

The protein belongs to the NfeD family.

It is found in the cell membrane. The protein localises to the membrane raft. Plays a role in assembly of FloT membrane rafts, probably recruited to rafts by FloT. The protein is Membrane protein NfeD2 of Bacillus subtilis (strain 168).